A 99-amino-acid polypeptide reads, in one-letter code: uncharacterized protein (99 aa).

An N-terminal signal peptide occupies residues 1-17 (MMMNAFFPAMALMVLVG). The N-palmitoyl cysteine moiety is linked to residue Cys-18. Cys-18 carries S-diacylglycerol cysteine lipidation.

The protein resides in the cell membrane. This is an uncharacterized protein from Shigella boydii serotype 4 (strain Sb227).